The chain runs to 483 residues: Cobyric acid synthase (483 aa).

A GATase cobBQ-type domain is found at Ala-251–Phe-438. The active-site Nucleophile is the Cys-333. The active site involves His-430.

The protein belongs to the CobB/CobQ family. CobQ subfamily.

The protein operates within cofactor biosynthesis; adenosylcobalamin biosynthesis. Catalyzes amidations at positions B, D, E, and G on adenosylcobyrinic A,C-diamide. NH(2) groups are provided by glutamine, and one molecule of ATP is hydrogenolyzed for each amidation. The protein is Cobyric acid synthase of Brucella suis (strain ATCC 23445 / NCTC 10510).